Here is a 254-residue protein sequence, read N- to C-terminus: Insulin-like growth factor-binding protein 4 (254 aa).

The signal sequence occupies residues 1-21 (MLPFGLVAALLLAAGPRPSLG). Residues 23–103 (EAIHCPPCSE…MHGQGVCTEL (81 aa)) enclose the IGFBP N-terminal domain. Disulfide bonds link C27–C53, C30–C55, C38–C56, C44–C59, C67–C80, and C74–C100. The N-linked (GlcNAc...) asparagine glycan is linked to N125. A disulfide bridge connects residues C131 and C138. A disordered region spans residues 149 to 169 (RSKMKVVGTPREEPRPVPQGS). The Thyroglobulin type-1 domain maps to 167–245 (QGSCQSELHR…GLEPKGELDC (79 aa)). Cystine bridges form between C170–C200, C211–C222, and C224–C245. Residue S251 is modified to Phosphoserine.

Binds IGF2 more than IGF1.

It localises to the secreted. IGF-binding proteins prolong the half-life of the IGFs and have been shown to either inhibit or stimulate the growth promoting effects of the IGFs on cell culture. They alter the interaction of IGFs with their cell surface receptors. The protein is Insulin-like growth factor-binding protein 4 (Igfbp4) of Rattus norvegicus (Rat).